The following is a 76-amino-acid chain: Omega-conotoxin MoVIA (76 aa).

The first 22 residues, 1–22, serve as a signal peptide directing secretion; it reads MKLTCVVIVAVLFLTACQLITA. A propeptide spanning residues 23–45 is cleaved from the precursor; sequence DDSRSTQRHRALRSTTKLSMSTR. Disulfide bonds link C46–C61, C53–C64, and C60–C71. Residues P49 and P55 each carry the hydroxyproline modification.

It belongs to the conotoxin O1 superfamily. Expressed by the venom duct.

It localises to the secreted. Its function is as follows. Omega-conotoxins act at presynaptic membranes, they bind and block voltage-gated calcium channels (Cav). This toxin potently blocks mammalian N-type calcium channels (Cav2.2/CACNA1B) (IC(50)=330 nM on human channels). It is 9-fold more potent in displacing radiolabeled omega-conotoxin GVIA from fish brain membranes than from human SH-SY5Y cells. Omega-conotoxins act at presynaptic membranes, they bind and block voltage-gated calcium channels (Cav). This toxin potently blocks mammalian N-type calcium channels (Cav2.2/CACNA1B) (IC(50)=600 nM on human channels). It is 60-fold more potent in displacing radiolabeled omega-conotoxin GVIA from fish brain membranes than from human SH-SY5Y cells. In vivo, when tested on rat neuropathic pain model, this toxin shows an analgesic activity. The sequence is that of Omega-conotoxin MoVIA from Conus moncuri (Sea snail).